The chain runs to 117 residues: Prefoldin subunit beta (117 aa).

Belongs to the prefoldin subunit beta family. As to quaternary structure, heterohexamer of two alpha and four beta subunits.

Its subcellular location is the cytoplasm. Its function is as follows. Molecular chaperone capable of stabilizing a range of proteins. Seems to fulfill an ATP-independent, HSP70-like function in archaeal de novo protein folding. This chain is Prefoldin subunit beta (pfdB), found in Pyrococcus horikoshii (strain ATCC 700860 / DSM 12428 / JCM 9974 / NBRC 100139 / OT-3).